A 123-amino-acid polypeptide reads, in one-letter code: Small ribosomal subunit protein uS12 (123 aa).

Position 89 is a 3-methylthioaspartic acid (D89).

The protein belongs to the universal ribosomal protein uS12 family. Part of the 30S ribosomal subunit. Contacts proteins S8 and S17. May interact with IF1 in the 30S initiation complex.

Its function is as follows. With S4 and S5 plays an important role in translational accuracy. Functionally, interacts with and stabilizes bases of the 16S rRNA that are involved in tRNA selection in the A site and with the mRNA backbone. Located at the interface of the 30S and 50S subunits, it traverses the body of the 30S subunit contacting proteins on the other side and probably holding the rRNA structure together. The combined cluster of proteins S8, S12 and S17 appears to hold together the shoulder and platform of the 30S subunit. The polypeptide is Small ribosomal subunit protein uS12 (Gluconobacter oxydans (strain 621H) (Gluconobacter suboxydans)).